A 116-amino-acid polypeptide reads, in one-letter code: Tyrosine-protein phosphatase 20 (116 aa).

Residues 1-116 (WMMIVEQKCR…EIGGDAPMVV (116 aa)) form the Tyrosine-protein phosphatase domain. Asp84 lines the substrate pocket.

Belongs to the protein-tyrosine phosphatase family.

It catalyses the reaction O-phospho-L-tyrosyl-[protein] + H2O = L-tyrosyl-[protein] + phosphate. This Styela plicata (Wrinkled sea squirt) protein is Tyrosine-protein phosphatase 20 (STY-20).